A 183-amino-acid chain; its full sequence is Dual-action ribosomal maturation protein DarP (183 aa).

Residues 1–21 form a disordered region; the sequence is MKQKPEDWLNDVPDNQEDDED.

Belongs to the DarP family.

The protein localises to the cytoplasm. Its function is as follows. Member of a network of 50S ribosomal subunit biogenesis factors which assembles along the 30S-50S interface, preventing incorrect 23S rRNA structures from forming. Promotes peptidyl transferase center (PTC) maturation. The sequence is that of Dual-action ribosomal maturation protein DarP from Pectobacterium atrosepticum (strain SCRI 1043 / ATCC BAA-672) (Erwinia carotovora subsp. atroseptica).